A 206-amino-acid chain; its full sequence is Small ribosomal subunit protein uS4 (206 aa).

Basic and acidic residues predominate over residues 1–16 (MTKRQESKYKIDRRMG). Residues 1-46 (MTKRQESKYKIDRRMGENIWGRPKSPVNRREYGPGQHGQRRKGKLS) form a disordered region. Residues 94 to 154 (RRLDAVVYRA…EKSKQLAIVL (61 aa)) enclose the S4 RNA-binding domain.

Belongs to the universal ribosomal protein uS4 family. As to quaternary structure, part of the 30S ribosomal subunit. Contacts protein S5. The interaction surface between S4 and S5 is involved in control of translational fidelity.

Its function is as follows. One of the primary rRNA binding proteins, it binds directly to 16S rRNA where it nucleates assembly of the body of the 30S subunit. With S5 and S12 plays an important role in translational accuracy. The chain is Small ribosomal subunit protein uS4 from Parvibaculum lavamentivorans (strain DS-1 / DSM 13023 / NCIMB 13966).